The following is a 707-amino-acid chain: uncharacterized protein (707 aa).

2 disordered regions span residues 15-122 (ALAK…LESY) and 667-707 (ESVQ…DIDE). Composition is skewed to basic and acidic residues over residues 18-32 (KKNDKIKKKDTDKGI) and 40-52 (EGKDETLKRDVEK). Phosphoserine is present on Ser-112. Positions 659–700 (EEQRKLIRESVQQDQEHKEQMRQKKKQALKSDDIELDDLSEE) form a coiled coil. Residues 692-707 (IELDDLSEEEAEDIDE) are compositionally biased toward acidic residues.

It belongs to the NOC2 family.

It is found in the nucleus. It localises to the nucleolus. This is an uncharacterized protein from Schizosaccharomyces pombe (strain 972 / ATCC 24843) (Fission yeast).